A 635-amino-acid chain; its full sequence is DNA topoisomerase 4 subunit B (635 aa).

Residues Tyr5, Asn45, Asp72, Gly113–Ala119, and Lys340 contribute to the ATP site. Positions Arg422 to Pro537 constitute a Toprim domain. Mg(2+) is bound by residues Glu428, Asp502, and Asp504.

Belongs to the type II topoisomerase family. ParE type 2 subfamily. In terms of assembly, heterotetramer composed of ParC and ParE. Requires Mg(2+) as cofactor. Mn(2+) serves as cofactor. It depends on Ca(2+) as a cofactor.

The catalysed reaction is ATP-dependent breakage, passage and rejoining of double-stranded DNA.. Its function is as follows. Topoisomerase IV is essential for chromosome segregation. It relaxes supercoiled DNA. Performs the decatenation events required during the replication of a circular DNA molecule. The polypeptide is DNA topoisomerase 4 subunit B (Mycoplasma pneumoniae (strain ATCC 29342 / M129 / Subtype 1) (Mycoplasmoides pneumoniae)).